The primary structure comprises 482 residues: 23S rRNA (uracil(1939)-C(5))-methyltransferase RlmD (482 aa).

The disordered stretch occupies residues 1–33 (MANLFKQSRAKQKNKTTPSQTQTSTKGSARANA). Residues 15 to 28 (KTTPSQTQTSTKGS) show a composition bias toward low complexity. Residues 51–108 (TAQDANNNAITIQELDWMGQGVARGATMYFVEGALPGETCDIEVVSSKKKVVSAKTIS) form the TRAM domain. [4Fe-4S] cluster-binding residues include cysteine 121, cysteine 127, cysteine 130, and cysteine 208. Residues glutamine 313, phenylalanine 342, asparagine 347, glutamate 363, aspartate 390, and aspartate 411 each contribute to the S-adenosyl-L-methionine site. The active-site Nucleophile is cysteine 437.

Belongs to the class I-like SAM-binding methyltransferase superfamily. RNA M5U methyltransferase family. RlmD subfamily.

It carries out the reaction uridine(1939) in 23S rRNA + S-adenosyl-L-methionine = 5-methyluridine(1939) in 23S rRNA + S-adenosyl-L-homocysteine + H(+). Functionally, catalyzes the formation of 5-methyl-uridine at position 1939 (m5U1939) in 23S rRNA. In Alteromonas mediterranea (strain DSM 17117 / CIP 110805 / LMG 28347 / Deep ecotype), this protein is 23S rRNA (uracil(1939)-C(5))-methyltransferase RlmD.